Consider the following 704-residue polypeptide: Elongation factor G 1 (704 aa).

The tr-type G domain occupies 8-285; it reads EKIRNIGISA…AVCAFLPNPK (278 aa). GTP is bound by residues 17 to 24, 84 to 88, and 138 to 141; these read AHIDSGKT, DTPGH, and NKMD.

Belongs to the TRAFAC class translation factor GTPase superfamily. Classic translation factor GTPase family. EF-G/EF-2 subfamily.

It is found in the cytoplasm. In terms of biological role, catalyzes the GTP-dependent ribosomal translocation step during translation elongation. During this step, the ribosome changes from the pre-translocational (PRE) to the post-translocational (POST) state as the newly formed A-site-bound peptidyl-tRNA and P-site-bound deacylated tRNA move to the P and E sites, respectively. Catalyzes the coordinated movement of the two tRNA molecules, the mRNA and conformational changes in the ribosome. The polypeptide is Elongation factor G 1 (Myxococcus xanthus (strain DK1622)).